We begin with the raw amino-acid sequence, 236 residues long: Small ribosomal subunit protein uS2c (236 aa).

The protein belongs to the universal ribosomal protein uS2 family.

The protein localises to the plastid. Its subcellular location is the chloroplast. The protein is Small ribosomal subunit protein uS2c (rps2) of Agrostis stolonifera (Creeping bentgrass).